The chain runs to 397 residues: Ribosomal RNA large subunit methyltransferase I (397 aa).

The PUA domain occupies 2–79; sequence SASIYLVKGR…KEETVDLDFF (78 aa).

It belongs to the methyltransferase superfamily. RlmI family.

The protein resides in the cytoplasm. It carries out the reaction cytidine(1962) in 23S rRNA + S-adenosyl-L-methionine = 5-methylcytidine(1962) in 23S rRNA + S-adenosyl-L-homocysteine + H(+). Its function is as follows. Specifically methylates the cytosine at position 1962 (m5C1962) of 23S rRNA. The polypeptide is Ribosomal RNA large subunit methyltransferase I (Aeromonas hydrophila subsp. hydrophila (strain ATCC 7966 / DSM 30187 / BCRC 13018 / CCUG 14551 / JCM 1027 / KCTC 2358 / NCIMB 9240 / NCTC 8049)).